We begin with the raw amino-acid sequence, 213 residues long: Ras-related protein Rab-25 (213 aa).

GTP is bound by residues Ser21, Gly24, Lys25, Thr26, Asn27, Ser38, His39, Thr43, and Thr44. Thr26 lines the Mg(2+) pocket. Short sequence motifs (switch) lie at residues 35-49 (NEFSHDSRTTIGVEF) and 67-84 (DTAGLERYRAITSAYYRG). Mg(2+) contacts are provided by Thr44 and Asp67. Residues Gly70, Asn125, Lys126, Asp128, Ala156, and Leu157 each coordinate GTP. S-geranylgeranyl cysteine attachment occurs at residues Cys209 and Cys210. The residue at position 210 (Cys210) is a Cysteine methyl ester. A propeptide spans 211-213 (ISL) (removed in mature form).

Belongs to the small GTPase superfamily. Rab family. As to quaternary structure, interacts (GTP-bound form) with RAB11FIP1, RAB11FIP2, RAB11FIP3 and RAB11FIP4. Interacts (via the hypervariable C-terminal region) with ITGB1 (via the cytoplasmic region); the interaction is GTP-dependent. Interacts with ITGAV. Associates with the integrin alpha-V/beta-1 heterodimer. Interacts with VPS33B. Requires Mg(2+) as cofactor.

The protein resides in the cell membrane. The protein localises to the cell projection. Its subcellular location is the pseudopodium membrane. It is found in the cytoplasmic vesicle. It catalyses the reaction GTP + H2O = GDP + phosphate + H(+). Its activity is regulated as follows. Regulated by guanine nucleotide exchange factors (GEFs) which promote the exchange of bound GDP for free GTP. Regulated by GTPase activating proteins (GAPs) which increase the GTP hydrolysis activity. Inhibited by GDP dissociation inhibitors (GDIs) which prevent Rab-GDP dissociation. In terms of biological role, the small GTPases Rab are key regulators of intracellular membrane trafficking, from the formation of transport vesicles to their fusion with membranes. Rabs cycle between an inactive GDP-bound form and an active GTP-bound form that is able to recruit to membranes different set of downstream effectors directly responsible for vesicle formation, movement, tethering and fusion. RAB25 regulates epithelial cell differentiation, proliferation and survival, thereby playing key roles in tumorigenesis. Promotes invasive migration of cells in which it functions to localize and maintain integrin alpha-V/beta-1 at the tips of extending pseudopodia. Involved in the regulation of epithelial morphogenesis through the control of CLDN4 expression and localization at tight junctions. May selectively regulate the apical recycling pathway. Together with MYO5B regulates transcytosis. In Mus musculus (Mouse), this protein is Ras-related protein Rab-25.